We begin with the raw amino-acid sequence, 644 residues long: Core protein VP4 (644 aa).

The protein belongs to the orbivirus VP4 family.

The protein resides in the virion. Functionally, the VP4 protein is one of the five proteins (with VP1, VP3, VP6 and VP7) which form the inner capsid of the virus. This chain is Core protein VP4 (Segment-4), found in Antilocapra americana (Pronghorn).